The sequence spans 110 residues: Ribonuclease P protein component (110 aa).

The protein belongs to the RnpA family. As to quaternary structure, consists of a catalytic RNA component (M1 or rnpB) and a protein subunit.

The catalysed reaction is Endonucleolytic cleavage of RNA, removing 5'-extranucleotides from tRNA precursor.. Its function is as follows. RNaseP catalyzes the removal of the 5'-leader sequence from pre-tRNA to produce the mature 5'-terminus. It can also cleave other RNA substrates such as 4.5S RNA. The protein component plays an auxiliary but essential role in vivo by binding to the 5'-leader sequence and broadening the substrate specificity of the ribozyme. This chain is Ribonuclease P protein component, found in Mesoplasma florum (strain ATCC 33453 / NBRC 100688 / NCTC 11704 / L1) (Acholeplasma florum).